A 124-amino-acid polypeptide reads, in one-letter code: Ribonuclease pancreatic (124 aa).

Positions 1–23 are disordered; it reads RESPAMKFQRQHMDSGNSPGNNP. 2 residues coordinate substrate: lysine 7 and arginine 10. Histidine 12 (proton acceptor) is an active-site residue. A compositionally biased stretch (polar residues) spans 14 to 23; sequence DSGNSPGNNP. Intrachain disulfides connect cysteine 26-cysteine 84, cysteine 40-cysteine 95, cysteine 58-cysteine 110, and cysteine 65-cysteine 72. Substrate-binding positions include 41–45 and lysine 66; that span reads KPVNT. Asparagine 76 carries an N-linked (GlcNAc...) asparagine; partial glycan. Arginine 85 is a substrate binding site. Residue histidine 119 is the Proton donor of the active site.

The protein belongs to the pancreatic ribonuclease family. As to quaternary structure, monomer. Interacts with and forms tight 1:1 complexes with RNH1. Dimerization of two such complexes may occur. Interaction with RNH1 inhibits this protein. In terms of tissue distribution, pancreas.

The protein resides in the secreted. The enzyme catalyses an [RNA] containing cytidine + H2O = an [RNA]-3'-cytidine-3'-phosphate + a 5'-hydroxy-ribonucleotide-3'-[RNA].. The catalysed reaction is an [RNA] containing uridine + H2O = an [RNA]-3'-uridine-3'-phosphate + a 5'-hydroxy-ribonucleotide-3'-[RNA].. Endonuclease that catalyzes the cleavage of RNA on the 3' side of pyrimidine nucleotides. Acts on single-stranded and double-stranded RNA. The polypeptide is Ribonuclease pancreatic (RNASE1) (Balaenoptera acutorostrata (Common minke whale)).